A 325-amino-acid polypeptide reads, in one-letter code: Protein FAM50B (325 aa).

The residue at position 2 (Ala2) is an N-acetylalanine. A disordered region spans residues 137–160 (RRAGNLGKNPDVDTSFLPDRDREE).

The protein belongs to the FAM50 family.

This Macaca fascicularis (Crab-eating macaque) protein is Protein FAM50B (FAM50B).